The following is a 524-amino-acid chain: Protein tweety homolog 3 (524 aa).

At 1-42 (MAGVSYAAPWWVSLLHRLPHFDLRWEATSSQFRPEDADYQQA) the chain is on the extracellular side. The chain crosses the membrane as a helical span at residues 43–63 (LLLLGATALACLALDLLFLLF). Over 64-86 (YSFWLCCRRRKTDEHLDADCCCT) the chain is Cytoplasmic. The chain crosses the membrane as a helical span at residues 87–107 (AWCVIITTLVCSAGIAVGFYG). At 108-211 (NGETSDGIHR…VDLYDWYRWL (104 aa)) the chain is on the extracellular side. Glu110 and Asp113 together coordinate Ca(2+). N-linked (GlcNAc...) asparagine glycans are attached at residues Asn126 and Asn144. A helical membrane pass occupies residues 212 to 232 (GYLGLLLLDVIICLLVLVGLI). The Cytoplasmic portion of the chain corresponds to 233 to 236 (RSSK). A helical transmembrane segment spans residues 237–257 (GILVGVCLLGVLALVISWGAL). Residues 258–386 (GLELAVSVGS…LTGFCYDGVE (129 aa)) are Extracellular-facing. Intrachain disulfides connect Cys271-Cys381 and Cys299-Cys366. An N-linked (GlcNAc...) asparagine glycan is attached at Asn351. Residues 387–407 (GLIYLALFSFVTALMFSSIVC) form a helical membrane-spanning segment. Topologically, residues 408–524 (SIPHTWQQKR…PRPDSSGSGH (117 aa)) are cytoplasmic. Disordered regions lie at residues 413-435 (WQQK…RQAH) and 485-524 (RCEN…GSGH). A Phosphoserine modification is found at Ser496. The PY-motif; mediates interaction with NEDD4L motif lies at 498-501 (PPSY). Residues 501–524 (YTSSMRAKYLATSQPRPDSSGSGH) show a composition bias toward polar residues. 2 positions are modified to phosphoserine: Ser504 and Ser522.

Belongs to the tweety family. Homotetramer; disulfide-linked. Forms cis-homodimers in the presence of Ca(2+). Interacts with NEDD4L. Ubiquitinated by NEDD4L. Post-translationally, N-glycosylated. As to expression, expressed in excitable tissues. Expressed in the brain, heart, skeletal muscle, colon, spleen, kidney and peripheral blood leukocytes. Also expressed in fat, the pancreas, thymus, and uterus.

The protein localises to the cell membrane. The catalysed reaction is chloride(in) = chloride(out). It carries out the reaction L-glutamate(out) = L-glutamate(in). With respect to regulation, inhibited by (4-[(2-butyl-6,7-dichloro-2- cyclopentyl-2,3-dihydro-1-oxo-1H-inden-5-yl)oxy]butanoic acid), genistein and PD98059 (MEK1 inhibitor). Calcium-independent, swelling-dependent volume-regulated anion channel (VRAC-swell) which plays a pivotal role in the process of regulatory volume decrease (RVD) in the brain through the efflux of anions like chloride and organic osmolytes like glutamate. Probable large-conductance Ca(2+)-activated chloride channel. This Mus musculus (Mouse) protein is Protein tweety homolog 3 (Ttyh3).